Here is a 64-residue protein sequence, read N- to C-terminus: Large ribosomal subunit protein bL35 (64 aa).

It belongs to the bacterial ribosomal protein bL35 family.

This Kineococcus radiotolerans (strain ATCC BAA-149 / DSM 14245 / SRS30216) protein is Large ribosomal subunit protein bL35.